Here is a 230-residue protein sequence, read N- to C-terminus: Protein UPS2, mitochondrial (230 aa).

In terms of domain architecture, PRELI/MSF1 spans 1 to 175; the sequence is MKLFQNSYDF…VLQVFSENWE (175 aa).

This sequence belongs to the slowmo family. As to quaternary structure, interacts with MDM35.

Its subcellular location is the mitochondrion inner membrane. It localises to the mitochondrion intermembrane space. Functionally, required for mitochondrial cristae morphogenesis and MGM1-processing. Controls the stability of mitochondrial phosphatidylethanolamine (PE). With UPS1, controls the level of cardiolipin in mitochondria. Cardiolipin is a unique phospholipid with four fatty acid chains and is present mainly in the mitochondrial inner membrane where it stabilizes the electron transport chain supercomplex between complexes III and IV through direct interaction of their subunits. The sequence is that of Protein UPS2, mitochondrial (UPS2) from Saccharomyces cerevisiae (strain ATCC 204508 / S288c) (Baker's yeast).